The sequence spans 110 residues: Vacuolar ATPase assembly integral membrane protein VMA21 (110 aa).

The segment at 1-28 is disordered; that stretch reads MTTRRIIGQDGEEKTYLDVDPRGPPGPS. The Cytoplasmic portion of the chain corresponds to 1 to 44; that stretch reads MTTRRIIGQDGEEKTYLDVDPRGPPGPSNISPAVPASVIWKLMS. Positions 11–21 are enriched in basic and acidic residues; that stretch reads GEEKTYLDVDP. A helical membrane pass occupies residues 45–65; it reads FTFAMITLPIGTYFFTVNYVF. Topologically, residues 66–71 are lumenal; the sequence is GGNATY. Residues 72 to 92 form a helical membrane-spanning segment; the sequence is AGALAAIMANVVLIAYVIMAF. Residues 93–110 lie on the Cytoplasmic side of the membrane; it reads KDDQAEQAEDAREAKKEL. The Prevents secretion from ER signature appears at 107–110; sequence KKEL.

This sequence belongs to the VMA21 family.

It localises to the endoplasmic reticulum membrane. Its subcellular location is the endoplasmic reticulum-Golgi intermediate compartment membrane. The protein localises to the cytoplasmic vesicle. It is found in the COPII-coated vesicle membrane. In terms of biological role, required for the assembly of the V0 complex of the vacuolar ATPase (V-ATPase) in the endoplasmic reticulum. This is Vacuolar ATPase assembly integral membrane protein VMA21 from Phaeosphaeria nodorum (strain SN15 / ATCC MYA-4574 / FGSC 10173) (Glume blotch fungus).